The primary structure comprises 197 residues: NADH-quinone oxidoreductase subunit C (197 aa).

The protein belongs to the complex I 30 kDa subunit family. NDH-1 is composed of 14 different subunits. Subunits NuoB, C, D, E, F, and G constitute the peripheral sector of the complex.

The protein localises to the cell inner membrane. It catalyses the reaction a quinone + NADH + 5 H(+)(in) = a quinol + NAD(+) + 4 H(+)(out). Functionally, NDH-1 shuttles electrons from NADH, via FMN and iron-sulfur (Fe-S) centers, to quinones in the respiratory chain. The immediate electron acceptor for the enzyme in this species is believed to be ubiquinone. Couples the redox reaction to proton translocation (for every two electrons transferred, four hydrogen ions are translocated across the cytoplasmic membrane), and thus conserves the redox energy in a proton gradient. The polypeptide is NADH-quinone oxidoreductase subunit C (Caulobacter vibrioides (strain ATCC 19089 / CIP 103742 / CB 15) (Caulobacter crescentus)).